A 438-amino-acid polypeptide reads, in one-letter code: UDP-N-acetylmuramate--L-alanine ligase (438 aa).

108–114 (GAHGKTS) contributes to the ATP binding site.

This sequence belongs to the MurCDEF family.

The protein localises to the cytoplasm. It carries out the reaction UDP-N-acetyl-alpha-D-muramate + L-alanine + ATP = UDP-N-acetyl-alpha-D-muramoyl-L-alanine + ADP + phosphate + H(+). It participates in cell wall biogenesis; peptidoglycan biosynthesis. In terms of biological role, cell wall formation. In Oceanobacillus iheyensis (strain DSM 14371 / CIP 107618 / JCM 11309 / KCTC 3954 / HTE831), this protein is UDP-N-acetylmuramate--L-alanine ligase.